The following is a 249-amino-acid chain: 6-phosphogluconolactonase 3 (249 aa).

It belongs to the glucosamine/galactosamine-6-phosphate isomerase family. 6-phosphogluconolactonase subfamily.

The protein resides in the cytoplasm. It localises to the nucleus. The enzyme catalyses 6-phospho-D-glucono-1,5-lactone + H2O = 6-phospho-D-gluconate + H(+). It functions in the pathway carbohydrate degradation; pentose phosphate pathway; D-ribulose 5-phosphate from D-glucose 6-phosphate (oxidative stage): step 2/3. Hydrolysis of 6-phosphogluconolactone to 6-phosphogluconate. This chain is 6-phosphogluconolactonase 3 (SOL3), found in Saccharomyces cerevisiae (strain RM11-1a) (Baker's yeast).